The primary structure comprises 239 residues: Purine nucleoside phosphorylase DeoD-type (239 aa).

Residue H5 coordinates a purine D-ribonucleoside. Residues G21, R25, R44, and 88 to 91 (RVGS) contribute to the phosphate site. A purine D-ribonucleoside is bound by residues 180–182 (EME) and 204–205 (SD). D205 (proton donor) is an active-site residue.

The protein belongs to the PNP/UDP phosphorylase family. In terms of assembly, homohexamer; trimer of homodimers.

The enzyme catalyses a purine D-ribonucleoside + phosphate = a purine nucleobase + alpha-D-ribose 1-phosphate. It carries out the reaction a purine 2'-deoxy-D-ribonucleoside + phosphate = a purine nucleobase + 2-deoxy-alpha-D-ribose 1-phosphate. In terms of biological role, catalyzes the reversible phosphorolytic breakdown of the N-glycosidic bond in the beta-(deoxy)ribonucleoside molecules, with the formation of the corresponding free purine bases and pentose-1-phosphate. This Pectobacterium atrosepticum (strain SCRI 1043 / ATCC BAA-672) (Erwinia carotovora subsp. atroseptica) protein is Purine nucleoside phosphorylase DeoD-type.